Reading from the N-terminus, the 1080-residue chain is Isoleucine--tRNA ligase (1080 aa).

Residues 48–58 carry the 'HIGH' region motif; it reads PYASGSIHLGT. The 'KMSKS' region motif lies at 628–632; that stretch reads KMSKS. Lys631 lines the ATP pocket.

Belongs to the class-I aminoacyl-tRNA synthetase family. IleS type 2 subfamily. In terms of assembly, monomer. The cofactor is Zn(2+).

The protein localises to the cytoplasm. It carries out the reaction tRNA(Ile) + L-isoleucine + ATP = L-isoleucyl-tRNA(Ile) + AMP + diphosphate. Catalyzes the attachment of isoleucine to tRNA(Ile). As IleRS can inadvertently accommodate and process structurally similar amino acids such as valine, to avoid such errors it has two additional distinct tRNA(Ile)-dependent editing activities. One activity is designated as 'pretransfer' editing and involves the hydrolysis of activated Val-AMP. The other activity is designated 'posttransfer' editing and involves deacylation of mischarged Val-tRNA(Ile). The sequence is that of Isoleucine--tRNA ligase from Methanopyrus kandleri (strain AV19 / DSM 6324 / JCM 9639 / NBRC 100938).